The sequence spans 268 residues: Phosphatidylglycerol--prolipoprotein diacylglyceryl transferase (268 aa).

The next 7 helical transmembrane spans lie at 10–30 (VALAIGPLKIHWYGLMYLIGI), 56–76 (LVFWLSMGVIVGGRLGYVLFY), 92–112 (WKGGMSFHGGFIGVMLAALWF), 120–140 (FFELMDFVAPLVPIGLGAGRI), 174–194 (PSQLYQFALEGVALFVILWLF), 202–222 (MAVSGMFSLCYGIFRFAVEFV), and 236–256 (WLTQGQLLCIPMIVGGLVLIW). Arg-139 serves as a coordination point for a 1,2-diacyl-sn-glycero-3-phospho-(1'-sn-glycerol).

The protein belongs to the Lgt family.

The protein resides in the cell inner membrane. The enzyme catalyses L-cysteinyl-[prolipoprotein] + a 1,2-diacyl-sn-glycero-3-phospho-(1'-sn-glycerol) = an S-1,2-diacyl-sn-glyceryl-L-cysteinyl-[prolipoprotein] + sn-glycerol 1-phosphate + H(+). The protein operates within protein modification; lipoprotein biosynthesis (diacylglyceryl transfer). In terms of biological role, catalyzes the transfer of the diacylglyceryl group from phosphatidylglycerol to the sulfhydryl group of the N-terminal cysteine of a prolipoprotein, the first step in the formation of mature lipoproteins. The polypeptide is Phosphatidylglycerol--prolipoprotein diacylglyceryl transferase (Pseudomonas putida (strain ATCC 47054 / DSM 6125 / CFBP 8728 / NCIMB 11950 / KT2440)).